A 233-amino-acid chain; its full sequence is Large ribosomal subunit protein eL6z (233 aa).

Positions 175-195 (EFFEAEKEEKKEIPQEKKEDQ) are disordered.

The protein belongs to the eukaryotic ribosomal protein eL6 family.

This chain is Large ribosomal subunit protein eL6z (RPL6A), found in Arabidopsis thaliana (Mouse-ear cress).